Consider the following 289-residue polypeptide: Rhodopsin (289 aa).

Topologically, residues 1 to 7 are extracellular; the sequence is YLVNPAA. Residues 8–32 traverse the membrane as a helical segment; that stretch reads YAALGAYMFLLILIGFPVNFLTLYV. Residues 33–44 lie on the Cytoplasmic side of the membrane; that stretch reads TIEHKKLRTPLN. Residues 45-67 form a helical membrane-spanning segment; sequence YILLNLAVANLFMVLGGFTTTMY. Residues 68–81 are Extracellular-facing; it reads TSMHGYFVLGRLGC. C81 and C158 are disulfide-bonded. A helical transmembrane segment spans residues 82–104; it reads NLEGFFATMGGEIALWSLVVLAI. Residues 105 to 107 carry the 'Ionic lock' involved in activated form stabilization motif; it reads ERW. At 105 to 123 the chain is on the cytoplasmic side; sequence ERWIVVCKPISNFRFTEDH. Residues 124–144 traverse the membrane as a helical segment; it reads AIMGLAFTWVMALSCAVPPLV. At 145–173 the chain is on the extracellular side; the sequence is GWSRYIPEGMQCSCGVDYYTRAEGFNNES. An N-linked (GlcNAc...) asparagine glycan is attached at N171. A helical transmembrane segment spans residues 174-195; it reads FVIYMFIVHFLTPLIIISFCYG. The Cytoplasmic portion of the chain corresponds to 196-223; the sequence is RLLCAVKEAAAAQQESETTQRAEREVSR. Residues 224 to 245 form a helical membrane-spanning segment; it reads MVVMMVISFLMCWLPYASVAWY. The Extracellular portion of the chain corresponds to 246–257; sequence IFCNQGSEFGPI. A helical membrane pass occupies residues 258 to 279; it reads FMTLPAFFAKSSAIYNPLIYIC. The residue at position 267 (K267) is an N6-(retinylidene)lysine. Residues 280-289 are Cytoplasmic-facing; the sequence is MNKQFRHCMI.

This sequence belongs to the G-protein coupled receptor 1 family. Opsin subfamily. In terms of processing, phosphorylated on some or all of the serine and threonine residues present in the C-terminal region. Contains one covalently linked retinal chromophore.

Its subcellular location is the membrane. It localises to the cell projection. The protein resides in the cilium. It is found in the photoreceptor outer segment. In terms of biological role, photoreceptor required for image-forming vision at low light intensity. While most salt water fish species use retinal as chromophore, most freshwater fish use 3-dehydroretinal, or a mixture of retinal and 3-dehydroretinal. Light-induced isomerization of 11-cis to all-trans retinal triggers a conformational change that activates signaling via G-proteins. Subsequent receptor phosphorylation mediates displacement of the bound G-protein alpha subunit by arrestin and terminates signaling. This Cottocomephorus inermis (Longfin Baikal sculpin) protein is Rhodopsin (rho).